We begin with the raw amino-acid sequence, 441 residues long: MNKDLQKVGIVSLGCPKALVDSERILTRLRAEGYEVSPTYDDANVVIVNTCGFLDSAKAESLEAIGEAMAQNGRVIVTGCMGGDEAAIRSAHPGVLAVTGPQQYERVVAAVHEAAPPAHDPYLDLVPAEGIRLTPRHYAYLKISEGCNHGCTFCIIPDLRGKLVSRPASKVLMEAEKLAEAGVRELLVISQDTSAYGVDLRHGESPWHGAPVKARMTELCSALGELGIWVRLHYVYPYPFVDEIIPLMAEGKILPYLDIPFQHASPKILEAMKRPAAQDRTLERIRRWRTICPDIALRSTFIVGFPGETEDDFQQLLDWMGEAELDRVGCFKYEAVAGAKANALADAVPEEVKEERWHRFMAAQQEISERRLAQKVGTVIEAIIDEVDEEGAIGRTKGDAPEIDGSLFLNGETSLAPGDIVPVLIEHADEYDLWGSLAGKD.

An MTTase N-terminal domain is found at glutamine 6 to proline 116. Residues cysteine 15, cysteine 51, cysteine 80, cysteine 147, cysteine 151, and cysteine 154 each contribute to the [4Fe-4S] cluster site. A Radical SAM core domain is found at leucine 133 to arginine 370. A TRAM domain is found at alanine 373–glycine 439.

Belongs to the methylthiotransferase family. RimO subfamily. [4Fe-4S] cluster is required as a cofactor.

The protein resides in the cytoplasm. It catalyses the reaction L-aspartate(89)-[ribosomal protein uS12]-hydrogen + (sulfur carrier)-SH + AH2 + 2 S-adenosyl-L-methionine = 3-methylsulfanyl-L-aspartate(89)-[ribosomal protein uS12]-hydrogen + (sulfur carrier)-H + 5'-deoxyadenosine + L-methionine + A + S-adenosyl-L-homocysteine + 2 H(+). Functionally, catalyzes the methylthiolation of an aspartic acid residue of ribosomal protein uS12. This is Ribosomal protein uS12 methylthiotransferase RimO from Rhodospirillum rubrum (strain ATCC 11170 / ATH 1.1.1 / DSM 467 / LMG 4362 / NCIMB 8255 / S1).